The sequence spans 829 residues: Spindle-defective protein 2 (829 aa).

Disordered regions lie at residues 1–29 (MNED…DGES), 41–104 (EDED…SNDI), 183–294 (KKDV…TTSD), and 326–471 (RKKR…NGHM). A compositionally biased stretch (basic and acidic residues) spans 54–82 (FRLENRYKPSLHTPRELPTIREENREDVR). Residues 83–93 (SNTSSRVNTRP) are compositionally biased toward polar residues. Positions 183–216 (KKDVTRKQENVRPGKMMPEKVNDENEPKSRRFSP) are enriched in basic and acidic residues. Polar residues-rich tracts occupy residues 217-230 (ERNT…NSTK) and 266-294 (PQRT…TTSD). Positions 314–332 (VDINLLTALENARKKRDRP) form a coiled coil. 2 stretches are compositionally biased toward low complexity: residues 361 to 370 (SMTSIVSSST) and 384 to 408 (NSAT…RVST). Polar residues-rich tracts occupy residues 409–439 (AKND…NSMT) and 448–463 (SVSS…STMT).

The protein localises to the cytoplasm. It localises to the cytoskeleton. The protein resides in the microtubule organizing center. It is found in the centrosome. Its subcellular location is the centriole. Its function is as follows. Required both for centrosome duplication and maturation. Required for pericentriolar material (PCM) recruitment. The sequence is that of Spindle-defective protein 2 from Caenorhabditis briggsae.